The primary structure comprises 372 residues: MIIHTLELSSYRNYSKTAVVFGEKINVFVGENAQGKTNLLEAIYVVALAKSHRTQKDKEMIGFEEPFARIHAKAEKRTGEVELDIILSAKGKKGKINGLEQRRLSDYVGTLNVVMFAPEDLDLVKGSPQVRRRFIDMELGQISPVYLNSLSLYGKILKQRNVLLKNMQQKRSQNYAMVDVLTEQLIDKAAFVMKKRAEFISRLEEWATPIHQSISRGKEMLTLSYIPSIEVSDIENMSKIKEDLYKAYETKRETEVRRGTTLFGPHRDDVSFSVNGLDVQSYGSQGQQRTTALSVKLAEIDLIYAEIGDYPILLLDDVLSELDNYRQSHLLEAIQARVQTFVTTTSTSGLDDSVLAEACLFSVDQGTVKRLE.

ATP is bound at residue 30-37 (GENAQGKT).

It belongs to the RecF family.

The protein localises to the cytoplasm. In terms of biological role, the RecF protein is involved in DNA metabolism; it is required for DNA replication and normal SOS inducibility. RecF binds preferentially to single-stranded, linear DNA. It also seems to bind ATP. This is DNA replication and repair protein RecF from Shouchella clausii (strain KSM-K16) (Alkalihalobacillus clausii).